The following is a 172-amino-acid chain: Chorion protein S18 (172 aa).

The signal sequence occupies residues 1–17 (MMKFMCICLCAISAVSA).

Belongs to the chorion protein S15/S18 family.

The protein resides in the secreted. Chorion membrane (egg shell) protein; plays a role in protecting the egg from the environment. This is Chorion protein S18 (Cp18) from Drosophila melanogaster (Fruit fly).